A 375-amino-acid chain; its full sequence is Alcohol dehydrogenase class-3 chain L (375 aa).

Ala-1 carries the post-translational modification N-acetylalanine. Positions 46, 68, 98, 101, 104, 112, and 175 each coordinate Zn(2+).

This sequence belongs to the zinc-containing alcohol dehydrogenase family. Class-III subfamily. In terms of assembly, homodimer or heterodimer with H chain. It depends on Zn(2+) as a cofactor.

It localises to the cytoplasm. The catalysed reaction is a primary alcohol + NAD(+) = an aldehyde + NADH + H(+). It catalyses the reaction a secondary alcohol + NAD(+) = a ketone + NADH + H(+). The enzyme catalyses S-(hydroxymethyl)glutathione + NADP(+) = S-formylglutathione + NADPH + H(+). It carries out the reaction S-(hydroxymethyl)glutathione + NAD(+) = S-formylglutathione + NADH + H(+). In terms of biological role, class-III ADH is remarkably ineffective in oxidizing ethanol, but it readily catalyzes the oxidation of long-chain primary alcohols and the oxidation of S-(hydroxymethyl) glutathione. The protein is Alcohol dehydrogenase class-3 chain L of Gadus morhua (Atlantic cod).